The following is a 78-amino-acid chain: Large ribosomal subunit protein bL28 (78 aa).

Residues methionine 1–asparagine 23 are disordered.

Belongs to the bacterial ribosomal protein bL28 family.

This is Large ribosomal subunit protein bL28 from Wigglesworthia glossinidia brevipalpis.